Consider the following 893-residue polypeptide: NEDD4-binding protein 1 (893 aa).

One can recognise a KH-like domain in the interval 59-143 (QEAVHSAKEY…IQQFVKLFES (85 aa)). The tract at residues 213-243 (EYTQSAATGPSSARDEVVVQEDSRNKARTPV) is disordered. Residues 214–223 (YTQSAATGPS) show a composition bias toward polar residues. The segment covering 225–237 (ARDEVVVQEDSRN) has biased composition (basic and acidic residues). Thr-241 bears the Phosphothreonine mark. Ser-257, Ser-269, and Ser-299 each carry phosphoserine. Disordered stretches follow at residues 273–339 (DALS…DGKD), 394–433 (RDFPPCTVYPDASQSRNAGVGSTTNELTADSTPKKAQSHT), and 472–564 (IWGS…PPLP). Polar residues-rich tracts occupy residues 405-433 (ASQSRNAGVGSTTNELTADSTPKKAQSHT) and 523-537 (GFQQQTEPLLPNNTK). The span at 551 to 564 (QPKPNYPPLSPPLP) shows a compositional bias: pro residues. Ser-560 is modified (phosphoserine). The RNase NYN domain maps to 615 to 767 (LKHIVIDGSN…LGRNGPRLEE (153 aa)). A disordered region spans residues 793 to 820 (PGFRSPSTQVANNSHQPPPRIQTSSSPW). Over residues 797-820 (SPSTQVANNSHQPPPRIQTSSSPW) the composition is skewed to polar residues. The interval 846–893 (RSSAETSELREALLKIFPDSEQKLKIDQILAAHPYMKDLNALSALVLD) is coCUN.

It belongs to the N4BP1 family. As to quaternary structure, interacts with NEDD4. Interacts with ITCH (via WW domain 2). In terms of processing, proteolytically cleaved by CASP8 downstream of TLR3 or TLR4, leading to its inactivation. Mainly cleaved at Asp-488 by CASP8. Cleaved by caspase-like protein MALT1, leading to its inactivation. Mono- and polyubiquitinated on the CoCUN region. Monoubiquitinated by NEDD4. Polyubiquitinated, leading to its degradation by the proteasome. Sumoylated with SUMO1, abrogating polyubiquitination and subsequent degradation. Desumoylated by SENP1, leading to accumulation in PML nuclear bodies.

The protein resides in the cytoplasm. It is found in the cytosol. It localises to the nucleus. The protein localises to the nucleolus. Its subcellular location is the PML body. Its activity is regulated as follows. Proteolytic cleavage by CASP8 or MALT1 leads to its inactivation. In terms of biological role, potent suppressor of cytokine production that acts as a regulator of innate immune signaling and inflammation. Acts as a key negative regulator of select cytokine and chemokine responses elicited by TRIF-independent Toll-like receptors (TLRs), thereby limiting inflammatory cytokine responses to minor insults. In response to more threatening pathogens, cleaved by CASP8 downstream of TLR3 or TLR4, leading to its inactivation, thereby allowing production of inflammatory cytokines. Acts as a restriction factor against some viruses: restricts viral replication by binding to mRNA viruses and mediating their degradation via its ribonuclease activity. Also acts as an inhibitor of the E3 ubiquitin-protein ligase ITCH: acts by interacting with the second WW domain of ITCH, leading to compete with ITCH's substrates and impairing ubiquitination of substrates. The protein is NEDD4-binding protein 1 of Mus musculus (Mouse).